Here is a 426-residue protein sequence, read N- to C-terminus: Enolase 1 (426 aa).

Glutamine 163 lines the (2R)-2-phosphoglycerate pocket. Glutamate 205 (proton donor) is an active-site residue. Mg(2+) is bound by residues aspartate 242, glutamate 283, and aspartate 310. (2R)-2-phosphoglycerate is bound by residues lysine 335, arginine 364, serine 365, and lysine 386. Lysine 335 acts as the Proton acceptor in catalysis.

It belongs to the enolase family. The cofactor is Mg(2+).

The protein resides in the cytoplasm. The protein localises to the secreted. It is found in the cell surface. The catalysed reaction is (2R)-2-phosphoglycerate = phosphoenolpyruvate + H2O. It functions in the pathway carbohydrate degradation; glycolysis; pyruvate from D-glyceraldehyde 3-phosphate: step 4/5. Functionally, catalyzes the reversible conversion of 2-phosphoglycerate (2-PG) into phosphoenolpyruvate (PEP). It is essential for the degradation of carbohydrates via glycolysis. The polypeptide is Enolase 1 (Streptomyces coelicolor (strain ATCC BAA-471 / A3(2) / M145)).